A 402-amino-acid chain; its full sequence is Eukaryotic initiation factor 4A (402 aa).

Residues 29–57 carry the Q motif motif; that stretch reads ESFDDMELKEELLRGIYGFGFEKPSAIQK. The region spanning 60-230 is the Helicase ATP-binding domain; that stretch reads IVPCTTGKDV…NRFMRNPIRI (171 aa). 73 to 80 is a binding site for ATP; sequence AQSGTGKT. A DEAD box motif is present at residues 178-181; sequence DEAD. The region spanning 241–402 is the Helicase C-terminal domain; the sequence is GIRQFYINVQ…EMPESIADLI (162 aa).

This sequence belongs to the DEAD box helicase family. eIF4A subfamily. EIF4F is a multi-subunit complex, the composition of which varies with external and internal environmental conditions. It is composed of at least EIF4A, EIF4E and EIF4G.

The enzyme catalyses ATP + H2O = ADP + phosphate + H(+). ATP-dependent RNA helicase which is a subunit of the eIF4F complex involved in cap recognition and is required for mRNA binding to ribosome. In the current model of translation initiation, eIF4A unwinds RNA secondary structures in the 5'-UTR of mRNAs which is necessary to allow efficient binding of the small ribosomal subunit, and subsequent scanning for the initiator codon. The chain is Eukaryotic initiation factor 4A (inf-1) from Caenorhabditis elegans.